The chain runs to 447 residues: Ribosomal protein uS12 methylthiotransferase RimO (447 aa).

Positions 10–120 constitute an MTTase N-terminal domain; it reads PKVGFVSLGC…VVNAVHDVVP (111 aa). [4Fe-4S] cluster-binding residues include cysteine 19, cysteine 55, cysteine 84, cysteine 153, cysteine 157, and cysteine 160. A Radical SAM core domain is found at 139 to 377; the sequence is LTPRHYAYLK…MAHQQAISAA (239 aa). A TRAM domain is found at 380–447; the sequence is QMKIGKEIEV…DEYDLWAEML (68 aa).

The protein belongs to the methylthiotransferase family. RimO subfamily. [4Fe-4S] cluster serves as cofactor.

The protein localises to the cytoplasm. The enzyme catalyses L-aspartate(89)-[ribosomal protein uS12]-hydrogen + (sulfur carrier)-SH + AH2 + 2 S-adenosyl-L-methionine = 3-methylsulfanyl-L-aspartate(89)-[ribosomal protein uS12]-hydrogen + (sulfur carrier)-H + 5'-deoxyadenosine + L-methionine + A + S-adenosyl-L-homocysteine + 2 H(+). In terms of biological role, catalyzes the methylthiolation of an aspartic acid residue of ribosomal protein uS12. This is Ribosomal protein uS12 methylthiotransferase RimO from Pseudomonas savastanoi pv. phaseolicola (strain 1448A / Race 6) (Pseudomonas syringae pv. phaseolicola (strain 1448A / Race 6)).